We begin with the raw amino-acid sequence, 501 residues long: NAD(P)H-quinone oxidoreductase chain 4, chloroplastic (501 aa).

15 consecutive transmembrane segments (helical) span residues Phe4–Leu24, Leu37–Phe57, Ile87–Ile107, Leu113–Ala130, Ile134–Met154, Phe167–Leu187, Ile207–Met227, His242–Ile262, Ser274–Thr294, Val310–Gly330, Ala331–Val351, Met364–Ala384, Ser385–Val405, Val416–Met436, and Ile462–Val482.

The protein belongs to the complex I subunit 4 family.

It is found in the plastid. The protein localises to the chloroplast thylakoid membrane. The enzyme catalyses a plastoquinone + NADH + (n+1) H(+)(in) = a plastoquinol + NAD(+) + n H(+)(out). It catalyses the reaction a plastoquinone + NADPH + (n+1) H(+)(in) = a plastoquinol + NADP(+) + n H(+)(out). The polypeptide is NAD(P)H-quinone oxidoreductase chain 4, chloroplastic (ndhD) (Anthoceros angustus (Hornwort)).